We begin with the raw amino-acid sequence, 429 residues long: MLRCRPEPLMPRATRVAVAVSLPLSHAVIPTQLPSHPGHRPSGRPRRCPKAPCLPSPVGLSSTQPAKRVTMGWPRPGQALVAVKALLVLSVLQVPAQAVVRAMLEDISSSVDFADLPALFGVPLAPEGIRGYLMEVKPANACHPVEAPRLGNRSLGAIALIRRYDCTFDLKVLNAQRAGFEAAIVHNVHSDDLVSMTHVSEDLRGQIAIPSVFVGEAASQDLRVILGCDKSAHVLLLPDDPPCRDLDCHPVLTVSWALGRTLALVVSTLFVLNRLWLWAQACCSHRRLVKTSTCQKAQVRTFTRRNDLCAICLDEYEEGDQLKILPCSHTYHCKCIDPWFSQAPRRSCPVCKQSVAGTEDSFDSTTDSFSDEDPSLPGHRPPIWAIQARLRSRRLELLGRASPHCHCSTTSLEAEDTTVSPAPPEAPGQ.

The signal sequence occupies residues 1–27; that stretch reads MLRCRPEPLMPRATRVAVAVSLPLSHA. Topologically, residues 28-250 are lumenal; sequence VIPTQLPSHP…PPCRDLDCHP (223 aa). The interval 30 to 64 is disordered; sequence PTQLPSHPGHRPSGRPRRCPKAPCLPSPVGLSSTQ. Basic residues predominate over residues 37–49; it reads PGHRPSGRPRRCP. Asn-152 carries an N-linked (GlcNAc...) asparagine glycan. The PA domain occupies 152-223; sequence NRSLGAIALI…VGEAASQDLR (72 aa). The chain crosses the membrane as a helical span at residues 251–271; the sequence is VLTVSWALGRTLALVVSTLFV. At 272–429 the chain is on the cytoplasmic side; the sequence is LNRLWLWAQA…SPAPPEAPGQ (158 aa). Residues 309–352 form an RING-type; atypical zinc finger; it reads CAICLDEYEEGDQLKILPCSHTYHCKCIDPWFSQAPRRSCPVCK. 2 disordered regions span residues 358 to 381 and 409 to 429; these read TEDS…GHRP and TTSL…APGQ. Positions 409 to 420 are enriched in polar residues; sequence TTSLEAEDTTVS.

In terms of assembly, interacts with CANX.

The protein localises to the endoplasmic reticulum membrane. The catalysed reaction is S-ubiquitinyl-[E2 ubiquitin-conjugating enzyme]-L-cysteine + [acceptor protein]-L-lysine = [E2 ubiquitin-conjugating enzyme]-L-cysteine + N(6)-ubiquitinyl-[acceptor protein]-L-lysine.. It participates in protein modification; protein ubiquitination. Its function is as follows. E3 ubiquitin-protein ligase that acts as a negative regulator of NOD2 signaling by mediating ubiquitination and degradation of RIPK2. Also catalyzes ubiquitination and proteasomal degradation of CANX within the endoplasmic reticulum. Could have a role in spermatogenesis. The sequence is that of E3 ubiquitin-protein ligase ZNRF4 (ZNRF4) from Macaca fascicularis (Crab-eating macaque).